Reading from the N-terminus, the 415-residue chain is Phosphoglycerate kinase (415 aa).

Residues valine 23, aspartate 24, phenylalanine 25, asparagine 26, glutamine 39, arginine 40, serine 63, histidine 64, glycine 66, arginine 67, leucine 122, arginine 123, and arginine 170 each contribute to the (2R)-3-phosphoglycerate site. Glycine 213 contributes to the ADP binding site. Residue glycine 213 participates in CDP binding. Alanine 214 and lysine 215 together coordinate AMP. Alanine 214 lines the ATP pocket. Residue alanine 214 coordinates Mg(2+). Aspartate 218 lines the CDP pocket. Position 218 (aspartate 218) interacts with Mg(2+). Lysine 219 is a binding site for AMP. Lysine 219 contributes to the ATP binding site. ADP is bound at residue glycine 237. A CDP-binding site is contributed by glycine 237. The AMP site is built by glycine 238 and glycine 311. ATP contacts are provided by glycine 238 and glycine 311. Positions 336 and 341 each coordinate CDP. Phenylalanine 341 serves as a coordination point for ADP. Position 342 (glutamate 342) interacts with AMP. Positions 342, 373, and 374 each coordinate ATP. Aspartate 373 is a binding site for Mg(2+).

It belongs to the phosphoglycerate kinase family. As to quaternary structure, monomer. The cofactor is Mg(2+).

It localises to the cytoplasm. It is found in the mitochondrion. The catalysed reaction is (2R)-3-phosphoglycerate + ATP = (2R)-3-phospho-glyceroyl phosphate + ADP. It participates in carbohydrate degradation; glycolysis; pyruvate from D-glyceraldehyde 3-phosphate: step 2/5. Catalyzes one of the two ATP producing reactions in the glycolytic pathway via the reversible conversion of 1,3-diphosphoglycerate to 3-phosphoglycerate. Both L- and D- forms of purine and pyrimidine nucleotides can be used as substrates, but the activity is much lower on pyrimidines. Negatively regulates the biosynthesis of acetyl-CoA from pyruvate in the mitochondrion. This Penicillium chrysogenum (Penicillium notatum) protein is Phosphoglycerate kinase (PGKA).